Reading from the N-terminus, the 213-residue chain is Pyridoxine/pyridoxamine 5'-phosphate oxidase (213 aa).

Residues 9-12 and K67 contribute to the substrate site; that span reads RKSY. Residues 62–67, 77–78, R83, and K84 contribute to the FMN site; these read RVVLIK and YT. The substrate site is built by Y124, R128, and S132. FMN-binding positions include 141-142 and W185; that span reads QS. Position 191–193 (191–193) interacts with substrate; that stretch reads RLH. Position 195 (R195) interacts with FMN.

The protein belongs to the pyridoxamine 5'-phosphate oxidase family. In terms of assembly, homodimer. FMN serves as cofactor.

It catalyses the reaction pyridoxamine 5'-phosphate + O2 + H2O = pyridoxal 5'-phosphate + H2O2 + NH4(+). It carries out the reaction pyridoxine 5'-phosphate + O2 = pyridoxal 5'-phosphate + H2O2. It functions in the pathway cofactor metabolism; pyridoxal 5'-phosphate salvage; pyridoxal 5'-phosphate from pyridoxamine 5'-phosphate: step 1/1. It participates in cofactor metabolism; pyridoxal 5'-phosphate salvage; pyridoxal 5'-phosphate from pyridoxine 5'-phosphate: step 1/1. Catalyzes the oxidation of either pyridoxine 5'-phosphate (PNP) or pyridoxamine 5'-phosphate (PMP) into pyridoxal 5'-phosphate (PLP). This chain is Pyridoxine/pyridoxamine 5'-phosphate oxidase, found in Methylibium petroleiphilum (strain ATCC BAA-1232 / LMG 22953 / PM1).